The primary structure comprises 515 residues: Glucose-6-phosphate 1-dehydrogenase X (515 aa).

N-acetylalanine is present on Ala2. NADP(+) contacts are provided by residues 38–45, Arg72, Tyr147, and Lys171; that span reads GASGDLAK. D-glucose 6-phosphate contacts are provided by residues Lys171, 201–205, Glu239, and Asp258; that span reads HYLGK. The Proton acceptor role is filled by His263. Arg357 provides a ligand contact to NADP(+). Lys360 and Arg365 together coordinate D-glucose 6-phosphate. NADP(+)-binding residues include Lys366, Arg370, and Arg393. D-glucose 6-phosphate is bound at residue Gln395. Residues 401 to 403, 421 to 423, Arg487, and Tyr503 contribute to the NADP(+) site; these read YTK and DLT. Position 507 is a phosphotyrosine (Tyr507). Position 509 (Trp509) interacts with NADP(+).

It belongs to the glucose-6-phosphate dehydrogenase family. Homotetramer; dimer of dimers. Interacts with SIRT2; the interaction is enhanced by H(2)O(2) treatment. Forms a ternary complex with ALDOB and TP53; this interaction is direct. ALDOB stabilizes the complex inhibiting G6PD activity and keeping oxidative pentose phosphate metabolism in check. In terms of processing, acetylated by ELP3 at Lys-403; acetylation inhibits its homodimerization and enzyme activity. Deacetylated by SIRT2 at Lys-403; deacetylation stimulates its enzyme activity.

Its subcellular location is the cytoplasm. It is found in the cytosol. The protein localises to the membrane. It carries out the reaction D-glucose 6-phosphate + NADP(+) = 6-phospho-D-glucono-1,5-lactone + NADPH + H(+). The protein operates within carbohydrate degradation; pentose phosphate pathway; D-ribulose 5-phosphate from D-glucose 6-phosphate (oxidative stage): step 1/3. Functionally, catalyzes the rate-limiting step of the oxidative pentose-phosphate pathway, which represents a route for the dissimilation of carbohydrates besides glycolysis. The main function of this enzyme is to provide reducing power (NADPH) and pentose phosphates for fatty acid and nucleic acid synthesis. The sequence is that of Glucose-6-phosphate 1-dehydrogenase X (G6pdx) from Mus musculus (Mouse).